Here is a 293-residue protein sequence, read N- to C-terminus: MPWIQLKLNTTGANAEELSDALMEVGSVSITFQDTHDTPVFEPLPGETRLWGDTDVIGLFDAETDMKDVVAILENHPLLGAGFVHKIEQLEDKDWEREWMDNFHPMQFGKRLWICPSWRDVPDPNAVNVMLDPGLAFGTGTHPTTSLCLQWLDGLDLEGKTVIDFGCGSGILAIAALKLGAAKAIGIDIDPQAIQASRDNAQRNGVSDRLELYLPNDQPDIMKADVVVANILAGPLRELAPLISVLPVEGGLLGLSGILASQADSVCEAYTELFTLDPVVEKEEWCRITGRKK.

Positions 145, 166, 188, and 230 each coordinate S-adenosyl-L-methionine.

It belongs to the methyltransferase superfamily. PrmA family.

The protein localises to the cytoplasm. The enzyme catalyses L-lysyl-[protein] + 3 S-adenosyl-L-methionine = N(6),N(6),N(6)-trimethyl-L-lysyl-[protein] + 3 S-adenosyl-L-homocysteine + 3 H(+). Functionally, methylates ribosomal protein L11. The protein is Ribosomal protein L11 methyltransferase of Enterobacter sp. (strain 638).